A 161-amino-acid polypeptide reads, in one-letter code: Nucleotide-binding protein PputW619_0959 (161 aa).

It belongs to the YajQ family.

Nucleotide-binding protein. This chain is Nucleotide-binding protein PputW619_0959, found in Pseudomonas putida (strain W619).